Here is a 471-residue protein sequence, read N- to C-terminus: Protein hedgehog (471 aa).

Cys-85 carries N-palmitoyl cysteine lipidation. Ca(2+) is bound by residues Glu-149, Glu-150, Asp-155, Thr-185, Glu-186, Asp-189, and Asp-191. Gly-257 carries Cholesterol glycine ester lipidation.

This sequence belongs to the hedgehog family. Interacts with shf. Interacts with ptc and CG5504/l(2)tid. Post-translationally, the C-terminal part of the hedgehog protein precursor displays an autoproteolysis activity that results in the cleavage of the full-length protein into two parts (N-product and C-product). In addition, the C-terminal part displays a cholesterol transferase activity that results by the covalent attachment of a cholesterol moiety to the C-terminal of the newly generated N-product. The N-product is the active species in both local and long-range signaling, whereas the C-product has no signaling activity. In terms of processing, cholesterylation is required for N-product targeting to lipid rafts and multimerization. N-palmitoylation by Rasp of the hedgehog N-product, within the secretory pathway, is required for the embryonic and larval patterning activities of the hedgehog signal. In terms of tissue distribution, in embryos, expression starts at stage 5 as a few stripes at the anterior and posterior ends, this expands to 17 stripes during stages 8-11. Expression is also seen in CNS and some PNS cells until stage 13-14, and in foregut, hindgut and salivary glands. In larvae, expression is seen in the posterior compartment of the wing, leg and antennal imaginal disks. In adults, high level of expression in specific regions of the proventriculus and hindgut, with slightly lower levels of expression in the posterior midgut. Relatively low levels of expression in the anterior midgut region.

The protein resides in the nucleus. It is found in the cytoplasm. It localises to the cell membrane. The enzyme catalyses glycyl-L-cysteinyl-[protein] + cholesterol + H(+) = [protein]-C-terminal glycyl cholesterol ester + N-terminal L-cysteinyl-[protein]. Its function is as follows. The C-terminal part of the hedgehog protein precursor displays an autoproteolysis activity that results in the cleavage of the full-length protein into two parts (N-product and C-product). In addition, the C-terminal part displays a cholesterol transferase activity that results by the covalent attachment of a cholesterol moiety to the C-terminal of the newly generated N-product. Once cleaved, the C-product has no signaling activity and diffuses from the cell. In terms of biological role, the dually lipidated hedgehog protein N-product is a morphogen which is essential for a variety of patterning events during development. Establishes the anterior-posterior axis of the embryonic segments and patterns the larval imaginal disks. Binds to the patched (ptc) receptor, which functions in association with smoothened (smo), to activate the transcription of target genes wingless (wg), decapentaplegic (dpp) and ptc. In the absence of hh, ptc represses the constitutive signaling activity of smo through fused (fu). Essential component of a signaling pathway which regulates the Duox-dependent gut immune response to bacterial uracil; required to activate Cad99C-dependent endosome formation, norpA-dependent Ca2+ mobilization and p38 MAPK, which are essential steps in the Duox-dependent production of reactive oxygen species (ROS) in response to intestinal bacterial infection. During photoreceptor differentiation, it up-regulates transcription of Ubr3, which in turn promotes the hh-signaling pathway by mediating the ubiquitination and degradation of cos. The protein is Protein hedgehog of Drosophila melanogaster (Fruit fly).